A 256-amino-acid polypeptide reads, in one-letter code: Nuclear shuttle protein (256 aa).

The tract at residues 18–50 (VSRNQSSKRGTFVRRTDGKRRKGPSSKAHDEPK) is disordered. The Bipartite nuclear localization signal motif lies at 21-42 (NQSSKRGTFVRRTDGKRRKGPS). The Nuclear localization signal motif lies at 81–96 (VLGKIEPNRSRSYIKL). The segment at 150–187 (EIFGARIHSHGNLAITPGLKDRYYVLHVLKRVLSVEKD) is interaction with Arabidopsis thaliana NSI protein.

It belongs to the begomovirus nuclear shuttle protein family. In terms of assembly, binds to single-stranded and double-stranded viral DNA. Interacts with the host nuclear shuttle interacting (NSI) protein. This interaction may allow NSP to recruit NSI monomers to the viral genome and thus regulate nuclear export of viral genome by NSP.

It localises to the host nucleus. The protein resides in the host cytoplasm. It is found in the host cell membrane. Functionally, binds to the genomic viral ssDNA, shuttles it into and out of the cell nucleus. Begomoviruses use 2 proteins to transport their DNA from cell to cell. The nuclear shuttle protein (NSP) shuttles it between nucleus and cytoplasm and the movement protein (MP) probably transports the DNA-NSP complex to the cell periphery and facilitates movement across the cell wall. The polypeptide is Nuclear shuttle protein (Brassica oleracea (Wild cabbage)).